The sequence spans 514 residues: Cardiolipin synthase 2 (514 aa).

The next 3 membrane-spanning stretches (helical) occupy residues 7 to 27 (LIFF…FIDV), 41 to 61 (ILGI…CVIF), and 71 to 91 (LTWL…YLLF). PLD phosphodiesterase domains follow at residues 249-276 (INYR…GDEY) and 427-454 (EKGF…DMRS). Active-site residues include His-254, Lys-256, Asp-261, His-432, Lys-434, and Asp-439.

It belongs to the phospholipase D family. Cardiolipin synthase subfamily.

The protein resides in the cell membrane. It carries out the reaction 2 a 1,2-diacyl-sn-glycero-3-phospho-(1'-sn-glycerol) = a cardiolipin + glycerol. Functionally, catalyzes the reversible phosphatidyl group transfer from one phosphatidylglycerol molecule to another to form cardiolipin (CL) (diphosphatidylglycerol) and glycerol. This chain is Cardiolipin synthase 2 (cls2), found in Bacillus anthracis.